Here is a 960-residue protein sequence, read N- to C-terminus: Pentatricopeptide repeat-containing protein At3g63370, chloroplastic (960 aa).

A chloroplast-targeting transit peptide spans 1–64 (MEYAVTNMRL…PKLACFDGVL (64 aa)). 20 PPR repeats span residues 79 to 109 (PVEA…IFKT), 115 to 145 (LDFL…MPDR), 146 to 180 (TAFA…GVPL), 181 to 215 (GLSS…GYHS), 216 to 246 (TGFI…FQEK), 248 to 282 (DAVL…GPAP), 283 to 317 (NSYT…STHS), 319 to 349 (ELYV…MNNA), 350 to 384 (DVVT…GHKS), 385 to 419 (DEVS…GWDS), 420 to 450 (NLQV…MHDK), 451 to 485 (DLIS…RMEI), 486 to 516 (DEMI…ILRK), 520 to 550 (DTVI…IKGK), 551 to 585 (DVVS…GLSA), 586 to 620 (DSVA…GFCL), 621 to 651 (EGSI…IERK), 652 to 686 (GLLQ…NVSP), 687 to 717 (DHIS…MEHE), and 723 to 753 (WPEH…MKTE). The tract at residues 758–833 (VWCALLAACR…HPGCSWIEMD (76 aa)) is type E motif. Residues 834 to 864 (GKVHKFTARDKSHPESKEIYEKLSEVTRKLE) form a type E(+) motif region. Residues 865–960 (REVGYVADTK…SGLCSCGDSW (96 aa)) are type DYW motif.

The protein belongs to the PPR family. PCMP-H subfamily.

It localises to the plastid. It is found in the chloroplast. Involved in RNA editing event in chloroplasts. Required for the editing of a single site in rps14 transcript. In Arabidopsis thaliana (Mouse-ear cress), this protein is Pentatricopeptide repeat-containing protein At3g63370, chloroplastic (PCMP-H83).